A 187-amino-acid polypeptide reads, in one-letter code: MSGGREIALLGGSFNPPHVAHLMAAWWALATQGVSEVWLLPTFRHPFGKDLAPFEDRLEMCRLAARALRGVHVCGAEAELAADPLVGKTARTLEHLAAKHPDQRFALIVGADILAETAKWYRWDRVQALARIIVVGRQGHPPVPGAPDLPAISSTEIRARLARGEDVRGLVPEKVLRYVEEKGLYRG.

Belongs to the NadD family.

It catalyses the reaction nicotinate beta-D-ribonucleotide + ATP + H(+) = deamido-NAD(+) + diphosphate. Its pathway is cofactor biosynthesis; NAD(+) biosynthesis; deamido-NAD(+) from nicotinate D-ribonucleotide: step 1/1. Functionally, catalyzes the reversible adenylation of nicotinate mononucleotide (NaMN) to nicotinic acid adenine dinucleotide (NaAD). In Anaeromyxobacter dehalogenans (strain 2CP-1 / ATCC BAA-258), this protein is Probable nicotinate-nucleotide adenylyltransferase.